The sequence spans 405 residues: mRNA cap guanine-N(7) methyltransferase (405 aa).

Positions 1-78 (MDNILNPEDN…PRLEEGHGSL (78 aa)) are disordered. Polar residues-rich tracts occupy residues 9–18 (DNVSQTNTET) and 36–45 (KFTASGQNLD). The span at 58 to 75 (KAGEPESPSKRPRLEEGH) shows a compositional bias: basic and acidic residues. Positions 97–404 (SRIFHLRNFN…IYLLFAFEKQ (308 aa)) constitute an mRNA cap 0 methyltransferase domain. MRNA is bound at residue 106 to 107 (NN). Lysine 110, glycine 134, aspartate 156, aspartate 190, glutamine 213, and tyrosine 218 together coordinate S-adenosyl-L-methionine.

The protein belongs to the class I-like SAM-binding methyltransferase superfamily. mRNA cap 0 methyltransferase family.

Its subcellular location is the nucleus. The enzyme catalyses a 5'-end (5'-triphosphoguanosine)-ribonucleoside in mRNA + S-adenosyl-L-methionine = a 5'-end (N(7)-methyl 5'-triphosphoguanosine)-ribonucleoside in mRNA + S-adenosyl-L-homocysteine. In terms of biological role, catalytic subunit of the mRNA-capping methyltransferase RNMT:RAMAC complex that methylates the N7 position of the added guanosine to the 5'-cap structure of mRNAs. Binds RNA containing 5'-terminal GpppC. The chain is mRNA cap guanine-N(7) methyltransferase (rnmt) from Xenopus tropicalis (Western clawed frog).